Consider the following 57-residue polypeptide: UPF0509 protein YciZ (57 aa).

Belongs to the UPF0509 family.

The sequence is that of UPF0509 protein YciZ from Escherichia coli O127:H6 (strain E2348/69 / EPEC).